We begin with the raw amino-acid sequence, 234 residues long: Endonuclease V (234 aa).

The Mg(2+) site is built by Asp-36 and Asp-104.

This sequence belongs to the endonuclease V family. Mg(2+) serves as cofactor.

It localises to the cytoplasm. The enzyme catalyses Endonucleolytic cleavage at apurinic or apyrimidinic sites to products with a 5'-phosphate.. Its function is as follows. DNA repair enzyme involved in the repair of deaminated bases. Selectively cleaves double-stranded DNA at the second phosphodiester bond 3' to a deoxyinosine leaving behind the intact lesion on the nicked DNA. The polypeptide is Endonuclease V (Yersinia enterocolitica serotype O:8 / biotype 1B (strain NCTC 13174 / 8081)).